The primary structure comprises 144 residues: MLVPKRVKHRREFRGKMRGEAKGGKEVAFGEWGLQATESHWITNRQIEAARIAMTRYMKRGGKVWIKIFPHKSYTSKAIGVRMGKGKGAPEGWVSPVKRGKIMFEIAGVPEEVAREALRLASHKLPVKTKIVKREEMGGESNEG.

The protein belongs to the universal ribosomal protein uL16 family. Part of the 50S ribosomal subunit.

Binds 23S rRNA and is also seen to make contacts with the A and possibly P site tRNAs. This Enterococcus faecalis (strain ATCC 700802 / V583) protein is Large ribosomal subunit protein uL16.